The sequence spans 471 residues: 3-isopropylmalate dehydratase large subunit (471 aa).

Residues C347, C407, and C410 each coordinate [4Fe-4S] cluster.

It belongs to the aconitase/IPM isomerase family. LeuC type 1 subfamily. In terms of assembly, heterodimer of LeuC and LeuD. [4Fe-4S] cluster is required as a cofactor.

It carries out the reaction (2R,3S)-3-isopropylmalate = (2S)-2-isopropylmalate. Its pathway is amino-acid biosynthesis; L-leucine biosynthesis; L-leucine from 3-methyl-2-oxobutanoate: step 2/4. Catalyzes the isomerization between 2-isopropylmalate and 3-isopropylmalate, via the formation of 2-isopropylmaleate. The protein is 3-isopropylmalate dehydratase large subunit of Geobacillus thermodenitrificans (strain NG80-2).